Reading from the N-terminus, the 197-residue chain is Large ribosomal subunit protein uL10 (197 aa).

Residues 162 to 197 (GGASAPAAEEAPAAEEAAAEEVAAPAEAAEAATEEN) form a disordered region. Residues 163–197 (GASAPAAEEAPAAEEAAAEEVAAPAEAAEAATEEN) are compositionally biased toward low complexity.

The protein belongs to the universal ribosomal protein uL10 family. Part of the ribosomal stalk of the 50S ribosomal subunit. The N-terminus interacts with L11 and the large rRNA to form the base of the stalk. The C-terminus forms an elongated spine to which L12 dimers bind in a sequential fashion forming a multimeric L10(L12)X complex.

Its function is as follows. Forms part of the ribosomal stalk, playing a central role in the interaction of the ribosome with GTP-bound translation factors. The polypeptide is Large ribosomal subunit protein uL10 (Paenarthrobacter aurescens (strain TC1)).